The primary structure comprises 323 residues: SURF1-like protein (323 aa).

Over residues 57 to 71 the composition is skewed to basic and acidic residues; it reads DAPKSRENREKDGGK. A disordered region spans residues 57 to 76; sequence DAPKSRENREKDGGKSKKSK. The next 2 helical transmembrane spans lie at 81–101 and 299–319; these read WSTGSVLMLTIPVFAFSLGIW and HLNYLTTWFTLTLVTMLMWIH.

This sequence belongs to the SURF1 family.

It localises to the mitochondrion inner membrane. Its function is as follows. Probably involved in the biogenesis of the COX complex. The sequence is that of SURF1-like protein (sft-1) from Caenorhabditis elegans.